Reading from the N-terminus, the 311-residue chain is MSVVNNRVALTNLVSMEALTTEEVLGLINRGSEYKAGKVVISDHQKDLVANLFFENSTRTHKSFEVAEKKLGLTVLDFNADASAVNKGESLYDTVLTMSALGTDICVIRHPEDDYYKELVESPTITASIVNGGDGSGQHPSQCLLDLLTIYEEFGRFEGLKIAIAGDLTHSRVAKSNMQILKRLGAELYFYGPEEWYSEAFNAYGTYIAIDQIIKELDVLMLLRVQHERHDGHQSFSKEGYHQAFGLTQERYQQLKDSAIIMHPAPVNRDVEIADSLVEAPKARIVSQMANGVFVRMAIIEAILNGRNKNL.

Positions 59 and 60 each coordinate carbamoyl phosphate. An L-aspartate-binding site is contributed by lysine 87. Residues arginine 109, histidine 139, and glutamine 142 each contribute to the carbamoyl phosphate site. 2 residues coordinate L-aspartate: arginine 172 and arginine 224. Alanine 265 and proline 266 together coordinate carbamoyl phosphate.

Belongs to the aspartate/ornithine carbamoyltransferase superfamily. ATCase family. Heterododecamer (2C3:3R2) of six catalytic PyrB chains organized as two trimers (C3), and six regulatory PyrI chains organized as three dimers (R2).

It catalyses the reaction carbamoyl phosphate + L-aspartate = N-carbamoyl-L-aspartate + phosphate + H(+). The protein operates within pyrimidine metabolism; UMP biosynthesis via de novo pathway; (S)-dihydroorotate from bicarbonate: step 2/3. Catalyzes the condensation of carbamoyl phosphate and aspartate to form carbamoyl aspartate and inorganic phosphate, the committed step in the de novo pyrimidine nucleotide biosynthesis pathway. In Streptococcus pyogenes serotype M18 (strain MGAS8232), this protein is Aspartate carbamoyltransferase catalytic subunit.